Consider the following 560-residue polypeptide: OTU domain-containing protein 5-A (560 aa).

Disordered regions lie at residues 1-100 (MTIL…MACV) and 141-190 (GGGT…QSED). Over residues 17–32 (DHPDDPDRRTGSDPHQ) the composition is skewed to basic and acidic residues. Residues 141 to 163 (GGGTGPGAAGGGGGGGGGGGVGG) show a composition bias toward gly residues. The 124-residue stretch at 211–334 (FVIKKMKEDG…NIHYNSVVNP (124 aa)) folds into the OTU domain. A cys-loop region spans residues 216-222 (MKEDGAC). D219 is a catalytic residue. C222 acts as the Nucleophile in catalysis. Residues 271-281 (KRKNNCHGNHI) are variable-loop. Positions 322–327 (YHRNIH) are his-loop. H327 is an active-site residue. The disordered stretch occupies residues 411–496 (ARQPRKASAT…ACVGPDRPTS (86 aa)). 2 stretches are compositionally biased toward low complexity: residues 417 to 430 (ASATCSSATAAASS) and 437 to 448 (ARSPRQRSSAPS).

Belongs to the peptidase C85 family.

The catalysed reaction is Thiol-dependent hydrolysis of ester, thioester, amide, peptide and isopeptide bonds formed by the C-terminal Gly of ubiquitin (a 76-residue protein attached to proteins as an intracellular targeting signal).. Functionally, deubiquitinating enzyme that may function as negative regulator of the innate immune system. Has peptidase activity towards 'Lys-48'- and 'Lys-63'-linked polyubiquitin chains. Can also cleave 'Lys-11'-linked ubiquitin chains (in vitro). This is OTU domain-containing protein 5-A (otud5a) from Danio rerio (Zebrafish).